Here is a 95-residue protein sequence, read N- to C-terminus: Co-chaperonin GroES (95 aa).

Belongs to the GroES chaperonin family. In terms of assembly, heptamer of 7 subunits arranged in a ring. Interacts with the chaperonin GroEL.

The protein localises to the cytoplasm. In terms of biological role, together with the chaperonin GroEL, plays an essential role in assisting protein folding. The GroEL-GroES system forms a nano-cage that allows encapsulation of the non-native substrate proteins and provides a physical environment optimized to promote and accelerate protein folding. GroES binds to the apical surface of the GroEL ring, thereby capping the opening of the GroEL channel. This Rickettsia prowazekii (strain Madrid E) protein is Co-chaperonin GroES.